The sequence spans 95 residues: Small ribosomal subunit protein bS18 (95 aa).

The protein belongs to the bacterial ribosomal protein bS18 family. Part of the 30S ribosomal subunit. Forms a tight heterodimer with protein bS6.

In terms of biological role, binds as a heterodimer with protein bS6 to the central domain of the 16S rRNA, where it helps stabilize the platform of the 30S subunit. The protein is Small ribosomal subunit protein bS18 of Rickettsia felis (strain ATCC VR-1525 / URRWXCal2) (Rickettsia azadi).